Reading from the N-terminus, the 279-residue chain is Putative pyruvate, phosphate dikinase regulatory protein (279 aa).

An ADP-binding site is contributed by 153–160 (GVSRTSKT).

It belongs to the pyruvate, phosphate/water dikinase regulatory protein family. PDRP subfamily.

The catalysed reaction is N(tele)-phospho-L-histidyl/L-threonyl-[pyruvate, phosphate dikinase] + ADP = N(tele)-phospho-L-histidyl/O-phospho-L-threonyl-[pyruvate, phosphate dikinase] + AMP + H(+). It catalyses the reaction N(tele)-phospho-L-histidyl/O-phospho-L-threonyl-[pyruvate, phosphate dikinase] + phosphate + H(+) = N(tele)-phospho-L-histidyl/L-threonyl-[pyruvate, phosphate dikinase] + diphosphate. Its function is as follows. Bifunctional serine/threonine kinase and phosphorylase involved in the regulation of the pyruvate, phosphate dikinase (PPDK) by catalyzing its phosphorylation/dephosphorylation. The chain is Putative pyruvate, phosphate dikinase regulatory protein from Rhodopseudomonas palustris (strain BisA53).